Consider the following 207-residue polypeptide: Uracil phosphoribosyltransferase (207 aa).

5-phospho-alpha-D-ribose 1-diphosphate is bound by residues arginine 77, arginine 102, and 129–137 (DPMVATGGS). Uracil contacts are provided by residues isoleucine 192 and 197-199 (GDA). Aspartate 198 serves as a coordination point for 5-phospho-alpha-D-ribose 1-diphosphate.

It belongs to the UPRTase family. The cofactor is Mg(2+).

It catalyses the reaction UMP + diphosphate = 5-phospho-alpha-D-ribose 1-diphosphate + uracil. It participates in pyrimidine metabolism; UMP biosynthesis via salvage pathway; UMP from uracil: step 1/1. Allosterically activated by GTP. Its function is as follows. Catalyzes the conversion of uracil and 5-phospho-alpha-D-ribose 1-diphosphate (PRPP) to UMP and diphosphate. This Mycobacterium bovis (strain ATCC BAA-935 / AF2122/97) protein is Uracil phosphoribosyltransferase.